Reading from the N-terminus, the 291-residue chain is 6-deoxy-6-sulfogluconolactonase (291 aa).

3 residues coordinate a divalent metal cation: E17, N148, and D198. D198 serves as the catalytic Proton donor/acceptor.

It belongs to the SMP-30/CGR1 family. Requires a divalent metal cation as cofactor.

The enzyme catalyses 6-deoxy-6-sulfo-D-glucono-1,5-lactone + H2O = 6-deoxy-6-sulfo-D-gluconate + H(+). Catalyzes the hydrolysis of 6-deoxy-6-sulfo-D-glucono-1,5-lactone to form 6-deoxy-6-sulfo-D-gluconate. Is involved in a degradation pathway of sulfoquinovose (SQ) that allows P.putida SQ1 to use SQ as the sole carbon and energy source for growth. This is 6-deoxy-6-sulfogluconolactonase from Pseudomonas putida (Arthrobacter siderocapsulatus).